A 1464-amino-acid polypeptide reads, in one-letter code: DNA-directed RNA polymerase subunit beta' (1464 aa).

Mg(2+) contacts are provided by Asp541, Asp543, and Asp545. Residues Cys1022, Cys1098, Cys1105, and Cys1108 each coordinate Zn(2+). A disordered region spans residues 1435-1464 (LEDEQQQIIEVDDSDISVEDEENDFYENED).

It belongs to the RNA polymerase beta' chain family. As to quaternary structure, the RNAP catalytic core consists of 2 alpha, 1 beta, 1 beta' and 1 omega subunit. When a sigma factor is associated with the core the holoenzyme is formed, which can initiate transcription. Requires Mg(2+) as cofactor. It depends on Zn(2+) as a cofactor.

It catalyses the reaction RNA(n) + a ribonucleoside 5'-triphosphate = RNA(n+1) + diphosphate. Its function is as follows. DNA-dependent RNA polymerase catalyzes the transcription of DNA into RNA using the four ribonucleoside triphosphates as substrates. This is DNA-directed RNA polymerase subunit beta' from Metamycoplasma arthritidis (strain 158L3-1) (Mycoplasma arthritidis).